We begin with the raw amino-acid sequence, 220 residues long: tRNA (guanine-N(7)-)-methyltransferase (220 aa).

Glutamate 44, glutamate 69, asparagine 96, and aspartate 118 together coordinate S-adenosyl-L-methionine. Aspartate 118 is a catalytic residue. Lysine 122 contributes to the substrate binding site. The interval 124-129 is interaction with RNA; sequence RHEKRR. Substrate is bound by residues aspartate 154 and 191–194; that span reads TEYE.

This sequence belongs to the class I-like SAM-binding methyltransferase superfamily. TrmB family.

It carries out the reaction guanosine(46) in tRNA + S-adenosyl-L-methionine = N(7)-methylguanosine(46) in tRNA + S-adenosyl-L-homocysteine. It functions in the pathway tRNA modification; N(7)-methylguanine-tRNA biosynthesis. Functionally, catalyzes the formation of N(7)-methylguanine at position 46 (m7G46) in tRNA. This is tRNA (guanine-N(7)-)-methyltransferase from Geobacillus sp. (strain WCH70).